Here is a 711-residue protein sequence, read N- to C-terminus: K(+)-insensitive pyrophosphate-energized proton pump (711 aa).

A run of 5 helical transmembrane segments spans residues 7–27 (LIYG…KFIF), 58–78 (IASL…YGHL), 85–105 (ALSF…CSAL), 145–165 (LAVT…YGGL), and 179–199 (IVGF…GGGI). Lysine 202 is a substrate binding site. The Mg(2+) site is built by aspartate 205, aspartate 209, and aspartate 235. 6 consecutive transmembrane segments (helical) span residues 251-271 (TAAE…IFGW), 274-294 (ILFP…GIFF), 311-331 (GYFV…KVML), 343-363 (YLLL…FVFL), 403-423 (LPVI…EMAI), and 431-451 (LYGT…ILAM). A Mg(2+)-binding site is contributed by aspartate 459. The next 4 helical transmembrane spans lie at 495-515 (YAIG…LDEV), 535-555 (EVFI…STAI), 602-622 (EMVI…VILG), and 624-644 (EAAA…ALYL). Residues aspartate 652, aspartate 678, and aspartate 682 each coordinate Ca(2+). Lysine 685 provides a ligand contact to substrate. A helical transmembrane segment spans residues 690–710 (PSLHVLIKLISTITLVFVALF).

The protein belongs to the H(+)-translocating pyrophosphatase (TC 3.A.10) family. K(+)-insensitive subfamily. In terms of assembly, homodimer. Requires Mg(2+) as cofactor.

It localises to the cell membrane. The enzyme catalyses diphosphate + H2O + H(+)(in) = 2 phosphate + 2 H(+)(out). Proton pump that utilizes the energy of pyrophosphate hydrolysis as the driving force for proton movement across the membrane. Generates a proton motive force. The chain is K(+)-insensitive pyrophosphate-energized proton pump from Caldanaerobacter subterraneus subsp. tengcongensis (strain DSM 15242 / JCM 11007 / NBRC 100824 / MB4) (Thermoanaerobacter tengcongensis).